The sequence spans 154 residues: Prefoldin subunit 2 (154 aa).

Disordered stretches follow at residues 1–20 (MADSSGRVGKSGGSGAGKGA) and 126–154 (LMGEDEKPAAKENSEGAGAKASSAGVLVS). Positions 9 to 18 (GKSGGSGAGK) are enriched in gly residues. The span at 126–139 (LMGEDEKPAAKENS) shows a compositional bias: basic and acidic residues. Low complexity predominate over residues 140–154 (EGAGAKASSAGVLVS).

The protein belongs to the prefoldin subunit beta family. Heterohexamer of two PFD-alpha type and four PFD-beta type subunits. Component of the PAQosome complex which is responsible for the biogenesis of several protein complexes and which consists of R2TP complex members RUVBL1, RUVBL2, RPAP3 and PIH1D1, URI complex members PFDN2, PFDN6, PDRG1, UXT and URI1 as well as ASDURF, POLR2E and DNAAF10/WDR92. Interacts with URI1; the interaction is phosphorylation-dependent and occurs in a growth-dependent manner.

The protein localises to the nucleus. Its subcellular location is the cytoplasm. It is found in the mitochondrion. Functionally, binds specifically to cytosolic chaperonin (c-CPN) and transfers target proteins to it. Binds to nascent polypeptide chain and promotes folding in an environment in which there are many competing pathways for nonnative proteins. The protein is Prefoldin subunit 2 (Pfdn2) of Mus musculus (Mouse).